Here is a 252-residue protein sequence, read N- to C-terminus: Sulfate transporter CysZ (252 aa).

5 consecutive transmembrane segments (helical) span residues 29 to 49, 66 to 86, 141 to 160, 164 to 186, and 212 to 232; these read FVLL…FYIF, FLSW…LATF, LVYI…IPAL, VAPF…DYPF, and ALVS…PVAV.

This sequence belongs to the CysZ family.

It localises to the cell inner membrane. Its function is as follows. High affinity, high specificity proton-dependent sulfate transporter, which mediates sulfate uptake. Provides the sulfur source for the cysteine synthesis pathway. The chain is Sulfate transporter CysZ from Vibrio atlanticus (strain LGP32) (Vibrio splendidus (strain Mel32)).